Consider the following 328-residue polypeptide: Cytochrome c biogenesis protein CcsA (328 aa).

Transmembrane regions (helical) follow at residues 13–33 (ISFS…LVNL), 46–66 (GIII…IFSG), 73–93 (LYES…VSYF), 101–121 (LNAI…SGLL), 146–166 (MILG…LLVI), 234–254 (IISL…VWAN), 263–283 (WDPK…YLHI), and 295–315 (AIVA…VNLL).

It belongs to the CcmF/CycK/Ccl1/NrfE/CcsA family. May interact with Ccs1.

It localises to the plastid. Its subcellular location is the chloroplast thylakoid membrane. In terms of biological role, required during biogenesis of c-type cytochromes (cytochrome c6 and cytochrome f) at the step of heme attachment. This is Cytochrome c biogenesis protein CcsA from Olimarabidopsis pumila (Dwarf rocket).